The following is a 132-amino-acid chain: Fatty acid-binding protein 1 (132 aa).

N-acetylalanine is present on Ala2.

This sequence belongs to the calycin superfamily. Fatty-acid binding protein (FABP) family.

This is Fatty acid-binding protein 1 (FABP-1) from Fasciola gigantica (Giant liver fluke).